The sequence spans 358 residues: Chondroadherin (358 aa).

An N-terminal signal peptide occupies residues 1-20 (MARVLLLSLVFLAILLPALA). The 30-residue stretch at 21–50 (ACPQNCHCHGDLQHVICDKVGLQKIPKVSE) folds into the LRRNT domain. Cys22 and Cys37 are joined by a disulfide. LRR repeat units follow at residues 51–72 (TTKL…SFRT), 75–96 (NLVS…AFRG), 99–120 (QLIY…AFDD), 123–144 (ELTY…LLSP), 147–168 (NLFI…AFQG), 171–192 (DLRW…SLDD), 195–216 (NLAK…ALSK), 219–240 (VVEE…AFQS), 244–265 (YLET…AFAG), and 268–289 (TLKH…FPFD). Ser143 carries an O-linked (GalNAc...) serine glycan. The LRRCT domain maps to 299–347 (NPWKCTCQLRGLRRWLEAKTSRPDATCSSPAKFKGQRIRDTDALRSCKS). Disulfide bonds link Cys303–Cys345 and Cys305–Cys325. A disordered region spans residues 321–358 (PDATCSSPAKFKGQRIRDTDALRSCKSPTKRSKKAGRH). The span at 348-358 (PTKRSKKAGRH) shows a compositional bias: basic residues.

It belongs to the small leucine-rich proteoglycan (SLRP) family. SLRP class IV subfamily. In terms of assembly, mostly monomeric. In terms of tissue distribution, present in femoral head and rib cartilage, as well as in tendon. Detected in bone marrow.

The protein resides in the secreted. It is found in the extracellular space. It localises to the extracellular matrix. Promotes attachment of chondrocytes, fibroblasts, and osteoblasts. This binding is mediated (at least for chondrocytes and fibroblasts) by the integrin alpha(2)beta(1). May play an important role in the regulation of chondrocyte growth and proliferation. The polypeptide is Chondroadherin (Chad) (Rattus norvegicus (Rat)).